The sequence spans 205 residues: Holliday junction branch migration complex subunit RuvA (205 aa).

The domain I stretch occupies residues Met1–Ile64. Positions His65–Gln143 are domain II. Residues Gly144–Ala156 form a flexible linker region. Positions Met157 to Leu205 are domain III.

It belongs to the RuvA family. In terms of assembly, homotetramer. Forms an RuvA(8)-RuvB(12)-Holliday junction (HJ) complex. HJ DNA is sandwiched between 2 RuvA tetramers; dsDNA enters through RuvA and exits via RuvB. An RuvB hexamer assembles on each DNA strand where it exits the tetramer. Each RuvB hexamer is contacted by two RuvA subunits (via domain III) on 2 adjacent RuvB subunits; this complex drives branch migration. In the full resolvosome a probable DNA-RuvA(4)-RuvB(12)-RuvC(2) complex forms which resolves the HJ.

Its subcellular location is the cytoplasm. Functionally, the RuvA-RuvB-RuvC complex processes Holliday junction (HJ) DNA during genetic recombination and DNA repair, while the RuvA-RuvB complex plays an important role in the rescue of blocked DNA replication forks via replication fork reversal (RFR). RuvA specifically binds to HJ cruciform DNA, conferring on it an open structure. The RuvB hexamer acts as an ATP-dependent pump, pulling dsDNA into and through the RuvAB complex. HJ branch migration allows RuvC to scan DNA until it finds its consensus sequence, where it cleaves and resolves the cruciform DNA. The polypeptide is Holliday junction branch migration complex subunit RuvA (Sodalis glossinidius (strain morsitans)).